The primary structure comprises 316 residues: CRISPR-associated endonuclease Cas1 (316 aa).

Mn(2+) contacts are provided by Glu-143, His-206, and Glu-221.

This sequence belongs to the CRISPR-associated endonuclease Cas1 family. As to quaternary structure, homodimer, forms a heterotetramer with a Cas2 homodimer. It depends on Mg(2+) as a cofactor. Requires Mn(2+) as cofactor.

Its function is as follows. CRISPR (clustered regularly interspaced short palindromic repeat), is an adaptive immune system that provides protection against mobile genetic elements (viruses, transposable elements and conjugative plasmids). CRISPR clusters contain spacers, sequences complementary to antecedent mobile elements, and target invading nucleic acids. CRISPR clusters are transcribed and processed into CRISPR RNA (crRNA). Acts as a dsDNA endonuclease. Involved in the integration of spacer DNA into the CRISPR cassette. In Aquifex aeolicus (strain VF5), this protein is CRISPR-associated endonuclease Cas1.